Consider the following 238-residue polypeptide: Probable xyloglucan-specific endo-beta-1,4-glucanase A (238 aa).

The N-terminal stretch at 1-18 is a signal peptide; that stretch reads MKLSLSVALSLAASTAQA. Residues N106 and N171 are each glycosylated (N-linked (GlcNAc...) asparagine).

It belongs to the glycosyl hydrolase 12 (cellulase H) family.

The protein localises to the secreted. The catalysed reaction is xyloglucan + H2O = xyloglucan oligosaccharides.. In terms of biological role, catalyzes endohydrolysis of 1,4-beta-D-glucosidic linkages in xyloglucan with retention of the beta-configuration of the glycosyl residues. Specific for xyloglucan and does not hydrolyze other cell wall components. The polypeptide is Probable xyloglucan-specific endo-beta-1,4-glucanase A (xgeA) (Aspergillus fumigatus (strain ATCC MYA-4609 / CBS 101355 / FGSC A1100 / Af293) (Neosartorya fumigata)).